The sequence spans 494 residues: ATP synthase subunit alpha, chloroplastic (494 aa).

Residue 170-177 (GDRQTGKT) coordinates ATP.

This sequence belongs to the ATPase alpha/beta chains family. In terms of assembly, F-type ATPases have 2 components, CF(1) - the catalytic core - and CF(0) - the membrane proton channel. CF(1) has five subunits: alpha(3), beta(3), gamma(1), delta(1), epsilon(1). CF(0) has four main subunits: a, b, b' and c.

It is found in the plastid. The protein resides in the chloroplast thylakoid membrane. The catalysed reaction is ATP + H2O + 4 H(+)(in) = ADP + phosphate + 5 H(+)(out). In terms of biological role, produces ATP from ADP in the presence of a proton gradient across the membrane. The alpha chain is a regulatory subunit. In Pinus thunbergii (Japanese black pine), this protein is ATP synthase subunit alpha, chloroplastic.